We begin with the raw amino-acid sequence, 196 residues long: Large ribosomal subunit protein uL5 (196 aa).

It belongs to the universal ribosomal protein uL5 family. In terms of assembly, part of the 50S ribosomal subunit; part of the 5S rRNA/L5/L18/L25 subcomplex. Contacts the 5S rRNA and the P site tRNA. Forms a bridge to the 30S subunit in the 70S ribosome.

Its function is as follows. This is one of the proteins that bind and probably mediate the attachment of the 5S RNA into the large ribosomal subunit, where it forms part of the central protuberance. In the 70S ribosome it contacts protein S13 of the 30S subunit (bridge B1b), connecting the 2 subunits; this bridge is implicated in subunit movement. Contacts the P site tRNA; the 5S rRNA and some of its associated proteins might help stabilize positioning of ribosome-bound tRNAs. This Chlorobium phaeobacteroides (strain BS1) protein is Large ribosomal subunit protein uL5.